The sequence spans 616 residues: Dihydroxy-acid dehydratase (616 aa).

D81 contacts Mg(2+). Residue C122 coordinates [2Fe-2S] cluster. Mg(2+) is bound by residues D123 and K124. An N6-carboxylysine modification is found at K124. C195 contacts [2Fe-2S] cluster. Position 491 (E491) interacts with Mg(2+). S517 serves as the catalytic Proton acceptor.

It belongs to the IlvD/Edd family. Homodimer. [2Fe-2S] cluster serves as cofactor. Requires Mg(2+) as cofactor.

It carries out the reaction (2R)-2,3-dihydroxy-3-methylbutanoate = 3-methyl-2-oxobutanoate + H2O. It catalyses the reaction (2R,3R)-2,3-dihydroxy-3-methylpentanoate = (S)-3-methyl-2-oxopentanoate + H2O. It participates in amino-acid biosynthesis; L-isoleucine biosynthesis; L-isoleucine from 2-oxobutanoate: step 3/4. Its pathway is amino-acid biosynthesis; L-valine biosynthesis; L-valine from pyruvate: step 3/4. In terms of biological role, functions in the biosynthesis of branched-chain amino acids. Catalyzes the dehydration of (2R,3R)-2,3-dihydroxy-3-methylpentanoate (2,3-dihydroxy-3-methylvalerate) into 2-oxo-3-methylpentanoate (2-oxo-3-methylvalerate) and of (2R)-2,3-dihydroxy-3-methylbutanoate (2,3-dihydroxyisovalerate) into 2-oxo-3-methylbutanoate (2-oxoisovalerate), the penultimate precursor to L-isoleucine and L-valine, respectively. The polypeptide is Dihydroxy-acid dehydratase (Salmonella heidelberg (strain SL476)).